We begin with the raw amino-acid sequence, 640 residues long: Probable potassium transport system protein Kup (640 aa).

The next 12 membrane-spanning stretches (helical) occupy residues 26 to 46, 69 to 89, 117 to 137, 155 to 175, 186 to 206, 224 to 244, 265 to 285, 297 to 317, 355 to 375, 384 to 404, 415 to 435, and 437 to 457; these read IAGL…TSPL, ILSL…VLFI, AWVL…DGMI, PAFR…LFVI, IFGP…IAGI, FFAD…LAIT, WFLV…ALIL, LLVP…ATII, IYVP…VVGF, AYGI…FVVV, AGLF…ATTV, and ILAG…LLTT.

The protein belongs to the HAK/KUP transporter (TC 2.A.72) family.

The protein localises to the cell inner membrane. The enzyme catalyses K(+)(in) + H(+)(in) = K(+)(out) + H(+)(out). In terms of biological role, transport of potassium into the cell. Likely operates as a K(+):H(+) symporter. This Aromatoleum aromaticum (strain DSM 19018 / LMG 30748 / EbN1) (Azoarcus sp. (strain EbN1)) protein is Probable potassium transport system protein Kup.